The following is a 289-amino-acid chain: MKLRLGLPKGSLQEATFQLFKQAGFELTVRSRSYFPSVNDPELEVVLMRAQEIPRYVHEGVLDAGLSGLDWILENEADVVEVADLVYAKSTPNPIRLVIAVANDSNIKSVSDLNGKRIATELVRVTQKFLRENGVNAYVEYSYGATEVKVPHLVDAIADITETGSSLKANNLRVIATILESTTKLHANKESWNDPWKREKLQNLAVLLQGALRARARVGLKMNVPGDRLDTILAILPAMKQPTISQLVNSDWVAVEVILEERQVRDLIPALKRAGAHDIIEYPLTKVIP.

This sequence belongs to the ATP phosphoribosyltransferase family. Long subfamily. It depends on Mg(2+) as a cofactor.

It is found in the cytoplasm. The catalysed reaction is 1-(5-phospho-beta-D-ribosyl)-ATP + diphosphate = 5-phospho-alpha-D-ribose 1-diphosphate + ATP. It functions in the pathway amino-acid biosynthesis; L-histidine biosynthesis; L-histidine from 5-phospho-alpha-D-ribose 1-diphosphate: step 1/9. Its activity is regulated as follows. Feedback inhibited by histidine. In terms of biological role, catalyzes the condensation of ATP and 5-phosphoribose 1-diphosphate to form N'-(5'-phosphoribosyl)-ATP (PR-ATP). Has a crucial role in the pathway because the rate of histidine biosynthesis seems to be controlled primarily by regulation of HisG enzymatic activity. The chain is ATP phosphoribosyltransferase from Pelotomaculum thermopropionicum (strain DSM 13744 / JCM 10971 / SI).